The primary structure comprises 802 residues: Oligophrenin-1 (802 aa).

In terms of domain architecture, PH spans Gln-265–Pro-368. The region spanning Met-380 to Tyr-564 is the Rho-GAP domain. 2 disordered regions span residues Gln-641–Glu-663 and Thr-682–Ser-802. Over residues His-716–Gly-732 the composition is skewed to basic and acidic residues. Polar residues predominate over residues Ser-751 to Ala-768.

As to quaternary structure, interacts with HOMER1. Interacts with AMPA receptor complexes. Interacts with SH3GL2 (endophilin-A1). Interacts (via C-terminus) with NR1D1. As to expression, high expression in brain, particularly in the cerebellum, hippocampus, thalamus, frontal lobes, sensory cortex. Found in the myelin sheaths of peripheral nerves, chromaffin cells within the adrenal medulla, and in extra-adrenal chromaffin cells associated with celiac ganglia.

It is found in the postsynapse. It localises to the presynapse. The protein localises to the cell projection. The protein resides in the axon. Its subcellular location is the dendritic spine. It is found in the dendrite. It localises to the cytoplasm. Functionally, stimulates GTP hydrolysis of members of the Rho family. Its action on RHOA activity and signaling is implicated in growth and stabilization of dendritic spines, and therefore in synaptic function, in hippocampal neurons. Critical for the stabilization of AMPA receptors at postsynaptic sites. Critical for the regulation of synaptic vesicle endocytosis at pre-synaptic terminals. Required for the localization of NR1D1 to dendrites, can suppress its repressor activity and protect it from proteasomal degradation. This Rattus norvegicus (Rat) protein is Oligophrenin-1 (Ophn1).